We begin with the raw amino-acid sequence, 317 residues long: Periplasmic [NiFe] hydrogenase small subunit 1 (317 aa).

A signal peptide (tat-type signal) is located at residues 1 to 49 (MRFSVGLGKEGAEERLARRGVSRRDFLKFCTAIAVTMGMGPAFAPEVAR). Cys67, Cys70, Cys164, Cys200, His238, Cys241, Cys266, and Cys272 together coordinate [4Fe-4S] cluster. Residues Cys281, Cys299, and Cys302 each coordinate [3Fe-4S] cluster.

This sequence belongs to the [NiFe]/[NiFeSe] hydrogenase small subunit family. In terms of assembly, heterodimer of a large and a small subunit. The cofactor is [3Fe-4S] cluster. Requires [4Fe-4S] cluster as cofactor. In terms of processing, predicted to be exported by the Tat system. The position of the signal peptide cleavage has not been experimentally proven.

It is found in the periplasm. The enzyme catalyses 2 Fe(III)-[cytochrome c3] + H2 = 2 Fe(II)-[cytochrome c3] + 2 H(+). This Nitratidesulfovibrio vulgaris (strain ATCC 29579 / DSM 644 / CCUG 34227 / NCIMB 8303 / VKM B-1760 / Hildenborough) (Desulfovibrio vulgaris) protein is Periplasmic [NiFe] hydrogenase small subunit 1 (hynB1).